Consider the following 216-residue polypeptide: Fibroblast growth factor 17 (216 aa).

The first 22 residues, 1–22 (MGAARLLPNLTLCLQLLILCCQ), serve as a signal peptide directing secretion. The N-linked (GlcNAc...) asparagine glycan is linked to asparagine 137. Residues 195–216 (FEFVGSAPTRRTKRTRRPQSQT) are disordered. A compositionally biased stretch (basic residues) spans 204-216 (RRTKRTRRPQSQT).

This sequence belongs to the heparin-binding growth factors family. Interacts with FGFR3 and FGFR4.

The protein resides in the secreted. In terms of biological role, plays an important role in the regulation of embryonic development and as signaling molecule in the induction and patterning of the embryonic brain. Required for normal brain development. The sequence is that of Fibroblast growth factor 17 (Fgf17) from Mus musculus (Mouse).